Reading from the N-terminus, the 296-residue chain is 2-dehydropantoate 2-reductase (296 aa).

Residues 7 to 12, Asn-94, and Ala-120 each bind NADP(+); that span reads GPGAVG. Residue Asn-94 participates in substrate binding. Lys-175 functions as the Proton donor in the catalytic mechanism. Positions 179, 183, 193, and 245 each coordinate substrate. Glu-257 contributes to the NADP(+) binding site.

Belongs to the ketopantoate reductase family.

It localises to the cytoplasm. It catalyses the reaction (R)-pantoate + NADP(+) = 2-dehydropantoate + NADPH + H(+). It participates in cofactor biosynthesis; (R)-pantothenate biosynthesis; (R)-pantoate from 3-methyl-2-oxobutanoate: step 2/2. Functionally, catalyzes the NADPH-dependent reduction of ketopantoate into pantoic acid. The protein is 2-dehydropantoate 2-reductase (panE) of Vibrio cholerae serotype O1 (strain ATCC 39315 / El Tor Inaba N16961).